Consider the following 296-residue polypeptide: Light-independent protochlorophyllide reductase iron-sulfur ATP-binding protein (296 aa).

ATP is bound by residues 10 to 15 and Lys39; that span reads GIGKST. Ser14 lines the Mg(2+) pocket. [4Fe-4S] cluster is bound by residues Cys95 and Cys129. Position 180–181 (180–181) interacts with ATP; that stretch reads NR.

This sequence belongs to the NifH/BchL/ChlL family. Homodimer. Protochlorophyllide reductase is composed of three subunits; ChlL, ChlN and ChlB. It depends on [4Fe-4S] cluster as a cofactor.

Its subcellular location is the plastid. The protein resides in the chloroplast. The catalysed reaction is chlorophyllide a + oxidized 2[4Fe-4S]-[ferredoxin] + 2 ADP + 2 phosphate = protochlorophyllide a + reduced 2[4Fe-4S]-[ferredoxin] + 2 ATP + 2 H2O. The protein operates within porphyrin-containing compound metabolism; chlorophyll biosynthesis (light-independent). Component of the dark-operative protochlorophyllide reductase (DPOR) that uses Mg-ATP and reduced ferredoxin to reduce ring D of protochlorophyllide (Pchlide) to form chlorophyllide a (Chlide). This reaction is light-independent. The L component serves as a unique electron donor to the NB-component of the complex, and binds Mg-ATP. This is Light-independent protochlorophyllide reductase iron-sulfur ATP-binding protein from Mesostigma viride (Green alga).